The chain runs to 649 residues: 1-deoxy-D-xylulose-5-phosphate synthase (649 aa).

Thiamine diphosphate contacts are provided by residues His-74 and 115-117 (GHA). Residue Asp-146 participates in Mg(2+) binding. Residues 147–148 (GA), Asn-176, Tyr-292, and Glu-375 contribute to the thiamine diphosphate site. Asn-176 is a binding site for Mg(2+).

It belongs to the transketolase family. DXPS subfamily. In terms of assembly, homodimer. The cofactor is Mg(2+). Thiamine diphosphate is required as a cofactor.

It catalyses the reaction D-glyceraldehyde 3-phosphate + pyruvate + H(+) = 1-deoxy-D-xylulose 5-phosphate + CO2. The protein operates within metabolic intermediate biosynthesis; 1-deoxy-D-xylulose 5-phosphate biosynthesis; 1-deoxy-D-xylulose 5-phosphate from D-glyceraldehyde 3-phosphate and pyruvate: step 1/1. In terms of biological role, catalyzes the acyloin condensation reaction between C atoms 2 and 3 of pyruvate and glyceraldehyde 3-phosphate to yield 1-deoxy-D-xylulose-5-phosphate (DXP). This is 1-deoxy-D-xylulose-5-phosphate synthase from Synechococcus sp. (strain JA-3-3Ab) (Cyanobacteria bacterium Yellowstone A-Prime).